The sequence spans 104 residues: Small ribosomal subunit protein uS10 (104 aa).

This sequence belongs to the universal ribosomal protein uS10 family. As to quaternary structure, part of the 30S ribosomal subunit.

Its function is as follows. Involved in the binding of tRNA to the ribosomes. This chain is Small ribosomal subunit protein uS10, found in Nitrosococcus oceani (strain ATCC 19707 / BCRC 17464 / JCM 30415 / NCIMB 11848 / C-107).